Here is a 560-residue protein sequence, read N- to C-terminus: uncharacterized protein (560 aa).

The signal sequence occupies residues 1-29 (MKSALKKSVVSTSISLILASGMAAFAAHA). Residues aspartate 66, aspartate 67, and serine 132 each contribute to the Ca(2+) site. Serine 132 serves as the catalytic Nucleophile. Serine 132 bears the 3-oxoalanine (Ser) mark. Histidine 185 is a catalytic residue. Ca(2+)-binding residues include aspartate 345 and asparagine 346.

The protein belongs to the sulfatase family. Requires Ca(2+) as cofactor. In terms of processing, the conversion to 3-oxoalanine (also known as C-formylglycine, FGly), of a serine or cysteine residue in prokaryotes and of a cysteine residue in eukaryotes, is critical for catalytic activity.

This is an uncharacterized protein from Escherichia coli (strain K12).